A 546-amino-acid polypeptide reads, in one-letter code: CTP synthase (546 aa).

Residues methionine 1 to isoleucine 265 are amidoligase domain. Serine 13 contributes to the CTP binding site. Serine 13 contacts UTP. ATP contacts are provided by residues serine 14–isoleucine 19 and aspartate 71. Mg(2+) is bound by residues aspartate 71 and glutamate 139. Residues aspartate 146–glutamate 148, lysine 186–glutamine 191, and lysine 222 contribute to the CTP site. Residues lysine 186–glutamine 191 and lysine 222 contribute to the UTP site. One can recognise a Glutamine amidotransferase type-1 domain in the interval asparagine 290 to lysine 543. L-glutamine is bound at residue glycine 351. Catalysis depends on cysteine 378, which acts as the Nucleophile; for glutamine hydrolysis. L-glutamine is bound by residues leucine 379 to glutamine 382, glutamate 402, and arginine 469. Residues histidine 516 and glutamate 518 contribute to the active site.

Belongs to the CTP synthase family. In terms of assembly, homotetramer.

The catalysed reaction is UTP + L-glutamine + ATP + H2O = CTP + L-glutamate + ADP + phosphate + 2 H(+). It carries out the reaction L-glutamine + H2O = L-glutamate + NH4(+). The enzyme catalyses UTP + NH4(+) + ATP = CTP + ADP + phosphate + 2 H(+). Its pathway is pyrimidine metabolism; CTP biosynthesis via de novo pathway; CTP from UDP: step 2/2. With respect to regulation, allosterically activated by GTP, when glutamine is the substrate; GTP has no effect on the reaction when ammonia is the substrate. The allosteric effector GTP functions by stabilizing the protein conformation that binds the tetrahedral intermediate(s) formed during glutamine hydrolysis. Inhibited by the product CTP, via allosteric rather than competitive inhibition. Its function is as follows. Catalyzes the ATP-dependent amination of UTP to CTP with either L-glutamine or ammonia as the source of nitrogen. Regulates intracellular CTP levels through interactions with the four ribonucleotide triphosphates. The chain is CTP synthase from Thiobacillus denitrificans (strain ATCC 25259 / T1).